The sequence spans 425 residues: Glutamate-1-semialdehyde 2,1-aminomutase (425 aa).

K264 is modified (N6-(pyridoxal phosphate)lysine).

This sequence belongs to the class-III pyridoxal-phosphate-dependent aminotransferase family. HemL subfamily. As to quaternary structure, homodimer. Pyridoxal 5'-phosphate is required as a cofactor.

The protein resides in the cytoplasm. It catalyses the reaction (S)-4-amino-5-oxopentanoate = 5-aminolevulinate. Its pathway is porphyrin-containing compound metabolism; protoporphyrin-IX biosynthesis; 5-aminolevulinate from L-glutamyl-tRNA(Glu): step 2/2. The polypeptide is Glutamate-1-semialdehyde 2,1-aminomutase (Leptospira biflexa serovar Patoc (strain Patoc 1 / Ames)).